Here is a 547-residue protein sequence, read N- to C-terminus: Chaperonin GroEL (547 aa).

ATP contacts are provided by residues 29–32 (TLGP), 86–90 (DGTTT), glycine 413, and aspartate 498.

Belongs to the chaperonin (HSP60) family. As to quaternary structure, forms a cylinder of 14 subunits composed of two heptameric rings stacked back-to-back. Interacts with the co-chaperonin GroES.

Its subcellular location is the cytoplasm. It catalyses the reaction ATP + H2O + a folded polypeptide = ADP + phosphate + an unfolded polypeptide.. Functionally, together with its co-chaperonin GroES, plays an essential role in assisting protein folding. The GroEL-GroES system forms a nano-cage that allows encapsulation of the non-native substrate proteins and provides a physical environment optimized to promote and accelerate protein folding. This chain is Chaperonin GroEL, found in Herpetosiphon aurantiacus (strain ATCC 23779 / DSM 785 / 114-95).